The sequence spans 732 residues: Aldehyde oxidoreductase molybdenum-binding subunit PaoC (732 aa).

Mo-molybdopterin cytosine dinucleotide contacts are provided by residues 241–242, 468–470, 511–512, 615–621, Q625, and 688–691; these read GF, IGT, GA, RILNPKT, and KGVG. Residue E692 is the Proton acceptor of the active site.

The protein belongs to the xanthine dehydrogenase family. Heterotrimer composed of PaoA, PaoB and PaoC. Requires Mo-molybdopterin cytosine dinucleotide as cofactor.

It is found in the periplasm. It catalyses the reaction an aldehyde + A + H2O = a carboxylate + AH2 + H(+). In terms of biological role, oxidizes aldehydes to the corresponding carboxylic acids with a preference for aromatic aldehydes. It might play a role in the detoxification of aldehydes to avoid cell damage. The polypeptide is Aldehyde oxidoreductase molybdenum-binding subunit PaoC (Escherichia coli O157:H7).